A 238-amino-acid chain; its full sequence is GATA transcription factor 7 (238 aa).

Residues 24–64 (TSLESSSSQRKEDEQEREKFKSFSDQSTRLSPPEDLLSFPG) are disordered. Over residues 32-45 (QRKEDEQEREKFKS) the composition is skewed to basic and acidic residues. The short motif at 112–119 (KPRSKRRR) is the Nuclear localization signal element. The GATA-type zinc-finger motif lies at 160 to 214 (QQLRRCCSHCGVQKTPQWRMGPLGAKTLCNACGVRFKSGRLLPEYRPACSPTFTN).

The protein belongs to the type IV zinc-finger family. Class A subfamily.

The protein resides in the nucleus. In terms of biological role, transcriptional activator that specifically binds 5'-GATA-3' or 5'-GAT-3' motifs within gene promoters. May be involved in the regulation of some light-responsive genes. This Arabidopsis thaliana (Mouse-ear cress) protein is GATA transcription factor 7 (GATA7).